Here is a 347-residue protein sequence, read N- to C-terminus: Beta-hexosaminidase (347 aa).

Substrate contacts are provided by residues aspartate 64, arginine 72, arginine 138, and 168–169 (KH). Residue histidine 181 is the Proton donor/acceptor of the active site. The active-site Nucleophile is aspartate 251.

The protein belongs to the glycosyl hydrolase 3 family. NagZ subfamily.

It localises to the cytoplasm. The enzyme catalyses Hydrolysis of terminal non-reducing N-acetyl-D-hexosamine residues in N-acetyl-beta-D-hexosaminides.. It participates in cell wall biogenesis; peptidoglycan recycling. Functionally, plays a role in peptidoglycan recycling by cleaving the terminal beta-1,4-linked N-acetylglucosamine (GlcNAc) from peptide-linked peptidoglycan fragments, giving rise to free GlcNAc, anhydro-N-acetylmuramic acid and anhydro-N-acetylmuramic acid-linked peptides. In Thioalkalivibrio sulfidiphilus (strain HL-EbGR7), this protein is Beta-hexosaminidase.